A 268-amino-acid chain; its full sequence is MNLTLKKFQVHPFHLVAPSPWPILVSFSVMSIMLTLVFNMHGFMHNNYWVVFSAIVAIMTMALWFRDIISEATYLGDHTLAVRKGLNIGFILFVVSELFFFIAIFWAFFHSAMAPTIELGGVWPPVGIEAIGPSELPLLNTILLLCSGATLTWSHHALLGGNRFNTLLGLILTIALAVTFMICQYMEYSNAPFTISDGIFGSVFYFGTGFHGLHIIIGIIMLGVSLWRIYTYQLTNNHHVGYETSILYYHFVDVVWLFLYIVFYWWGT.

The next 7 membrane-spanning stretches (helical) occupy residues Ile23–Phe43, Trp49–Ile69, Ile88–Phe108, Thr141–Gly161, Thr166–Met186, Val203–Gly223, and Ile246–Trp266.

This sequence belongs to the cytochrome c oxidase subunit 3 family. Component of the cytochrome c oxidase (complex IV, CIV), a multisubunit enzyme composed of a catalytic core of 3 subunits and several supernumerary subunits. The complex exists as a monomer or a dimer and forms supercomplexes (SCs) in the inner mitochondrial membrane with ubiquinol-cytochrome c oxidoreductase (cytochrome b-c1 complex, complex III, CIII).

It is found in the mitochondrion inner membrane. The catalysed reaction is 4 Fe(II)-[cytochrome c] + O2 + 8 H(+)(in) = 4 Fe(III)-[cytochrome c] + 2 H2O + 4 H(+)(out). In terms of biological role, component of the cytochrome c oxidase, the last enzyme in the mitochondrial electron transport chain which drives oxidative phosphorylation. The respiratory chain contains 3 multisubunit complexes succinate dehydrogenase (complex II, CII), ubiquinol-cytochrome c oxidoreductase (cytochrome b-c1 complex, complex III, CIII) and cytochrome c oxidase (complex IV, CIV), that cooperate to transfer electrons derived from NADH and succinate to molecular oxygen, creating an electrochemical gradient over the inner membrane that drives transmembrane transport and the ATP synthase. Cytochrome c oxidase is the component of the respiratory chain that catalyzes the reduction of oxygen to water. Electrons originating from reduced cytochrome c in the intermembrane space (IMS) are transferred via the dinuclear copper A center (CU(A)) of subunit 2 and heme A of subunit 1 to the active site in subunit 1, a binuclear center (BNC) formed by heme A3 and copper B (CU(B)). The BNC reduces molecular oxygen to 2 water molecules using 4 electrons from cytochrome c in the IMS and 4 protons from the mitochondrial matrix. The chain is Cytochrome c oxidase subunit 3 (COX3) from Yarrowia lipolytica (strain CLIB 122 / E 150) (Yeast).